The following is a 473-amino-acid chain: MKTGRISQIMGPVVDVRFEDGHLPEIYNAIRVSHKAESESEVDIDLTLEVALHLGDDTVRTIAMASTDGVKRGMEAVDLGKPISVPVGNVTLGRVFNVLGDNIDLDEPLGVEAQRDPIHRQAPSFDQLSTEVEILETGIKVVDLLAPYIKGGKIGLFGGAGVGKTVLIQELINNIAQEHGGISVFAGVGERTREGNDLYYEMKDSGVIEKTAMVFGQMNEPPGARMRVALTGLTMAEHFRDELGQDVLFFIDNIYRFTQAGSEVSALLGRMPSAVGYQPTLATEMGQLQERITSTNVGSVTSIQAIYVPADDYTDPAPATTFAHLDATTNLERKLTEMGIYPAVDPLASTSRALAPEIVGEEHYAIAREVQQTLQRYKELQDIIAILGMDELSEDDKLVVHRARRVQFFLSQNFHVAEQFTGQKGSYVPLKETVKGFKEILSGKYDHLPEDAFRLVGRIEEVVEKAKEMGVEA.

Position 158-165 (158-165) interacts with ATP; that stretch reads GGAGVGKT.

Belongs to the ATPase alpha/beta chains family. F-type ATPases have 2 components, CF(1) - the catalytic core - and CF(0) - the membrane proton channel. CF(1) has five subunits: alpha(3), beta(3), gamma(1), delta(1), epsilon(1). CF(0) has three main subunits: a(1), b(2) and c(9-12). The alpha and beta chains form an alternating ring which encloses part of the gamma chain. CF(1) is attached to CF(0) by a central stalk formed by the gamma and epsilon chains, while a peripheral stalk is formed by the delta and b chains.

The protein localises to the cell membrane. It catalyses the reaction ATP + H2O + 4 H(+)(in) = ADP + phosphate + 5 H(+)(out). Produces ATP from ADP in the presence of a proton gradient across the membrane. The catalytic sites are hosted primarily by the beta subunits. The protein is ATP synthase subunit beta of Bacillus pumilus (strain SAFR-032).